The sequence spans 343 residues: Anthranilate phosphoribosyltransferase (343 aa).

5-phospho-alpha-D-ribose 1-diphosphate contacts are provided by residues glycine 77, 80-81, threonine 85, 87-90, 105-113, and serine 117; these read GD, NVST, and KHGNRSSSG. An anthranilate-binding site is contributed by glycine 77. Serine 89 serves as a coordination point for Mg(2+). Asparagine 108 serves as a coordination point for anthranilate. Residue arginine 163 participates in anthranilate binding. Residues aspartate 222 and glutamate 223 each coordinate Mg(2+).

It belongs to the anthranilate phosphoribosyltransferase family. As to quaternary structure, homodimer. Requires Mg(2+) as cofactor.

It catalyses the reaction N-(5-phospho-beta-D-ribosyl)anthranilate + diphosphate = 5-phospho-alpha-D-ribose 1-diphosphate + anthranilate. Its pathway is amino-acid biosynthesis; L-tryptophan biosynthesis; L-tryptophan from chorismate: step 2/5. In terms of biological role, catalyzes the transfer of the phosphoribosyl group of 5-phosphorylribose-1-pyrophosphate (PRPP) to anthranilate to yield N-(5'-phosphoribosyl)-anthranilate (PRA). This Cenarchaeum symbiosum (strain A) protein is Anthranilate phosphoribosyltransferase.